A 415-amino-acid polypeptide reads, in one-letter code: Phosphoribosylamine--glycine ligase (415 aa).

Positions 108–311 (KKIMEKYNIP…LMQHIIDLDE (204 aa)) constitute an ATP-grasp domain. Position 134-191 (134-191 (IENCELPVVVKKDGLAAGKGVIIADTIEAARSAIEIMYGDEEEGTVVFETFLEGEEFS)) interacts with ATP. The Mg(2+) site is built by E281 and N283.

This sequence belongs to the GARS family. Requires Mg(2+) as cofactor. The cofactor is Mn(2+).

The catalysed reaction is 5-phospho-beta-D-ribosylamine + glycine + ATP = N(1)-(5-phospho-beta-D-ribosyl)glycinamide + ADP + phosphate + H(+). Its pathway is purine metabolism; IMP biosynthesis via de novo pathway; N(1)-(5-phospho-D-ribosyl)glycinamide from 5-phospho-alpha-D-ribose 1-diphosphate: step 2/2. The polypeptide is Phosphoribosylamine--glycine ligase (Staphylococcus aureus (strain COL)).